Reading from the N-terminus, the 61-residue chain is Photosystem II reaction center protein K (61 aa).

Residues 1-24 constitute a propeptide that is removed on maturation; the sequence is MLNILNLICICLNFALYSSSFFFT. A helical membrane pass occupies residues 40 to 60; it reads MPVIPLFFFLLAFVWQAAVSF.

Belongs to the PsbK family. PSII is composed of 1 copy each of membrane proteins PsbA, PsbB, PsbC, PsbD, PsbE, PsbF, PsbH, PsbI, PsbJ, PsbK, PsbL, PsbM, PsbT, PsbX, PsbY, PsbZ, Psb30/Ycf12, at least 3 peripheral proteins of the oxygen-evolving complex and a large number of cofactors. It forms dimeric complexes.

It is found in the plastid. The protein resides in the chloroplast thylakoid membrane. Functionally, one of the components of the core complex of photosystem II (PSII). PSII is a light-driven water:plastoquinone oxidoreductase that uses light energy to abstract electrons from H(2)O, generating O(2) and a proton gradient subsequently used for ATP formation. It consists of a core antenna complex that captures photons, and an electron transfer chain that converts photonic excitation into a charge separation. This chain is Photosystem II reaction center protein K, found in Populus alba (White poplar).